We begin with the raw amino-acid sequence, 242 residues long: Small ribosomal subunit protein uS7m (242 aa).

Residues 1–37 (MAAPALRAPLRWSGLALGVRCAVWNLPGLTQVRGSRY) constitute a mitochondrion transit peptide. An N6-acetyllysine modification is found at K228.

This sequence belongs to the universal ribosomal protein uS7 family. As to quaternary structure, component of the mitochondrial ribosome small subunit (28S) which comprises a 12S rRNA and about 30 distinct proteins.

It is found in the mitochondrion. The sequence is that of Small ribosomal subunit protein uS7m (Mrps7) from Mus musculus (Mouse).